We begin with the raw amino-acid sequence, 340 residues long: MAVSIYYDKDCDINLIKSKKVAIIGFGSQGHAHAMNLRDSGVEVIIGLKEGGQSWAKAQKANFIVKSVKEATKEADLIMILAPDEIQSEIFNEEIKPELKAGKTLAFAHGFNIHYGQIVAPKGIDVIMIAPKAPGHTVRHEFSIGGGTPCLIAIHQDESKNAKNLALSYASAIGGGRTGIIETTFKAETETDLFGEQAVLCGGLSALIQAGFETLVEAGYEPEMAYFECLHEMKLIVDLIYQGGIADMRYSVSNTAEYGDYITGPKIITKETKEAMKGVLKDIQNGSFAKDFILERRANFARMHAERKLMNDSLIEKTGRELRAMMPWISAKKLVDKDKN.

The 181-residue stretch at 3–183 folds into the KARI N-terminal Rossmann domain; the sequence is VSIYYDKDCD…GGGRTGIIET (181 aa). Residues 26 to 29, Lys-49, Ser-54, and 84 to 87 each bind NADP(+); these read FGSQ and DEIQ. Residue His-109 is part of the active site. Gly-135 is a binding site for NADP(+). One can recognise a KARI C-terminal knotted domain in the interval 184 to 329; it reads TFKAETETDL…RELRAMMPWI (146 aa). Residues Asp-192, Glu-196, Glu-228, and Glu-232 each contribute to the Mg(2+) site. Ser-253 serves as a coordination point for substrate.

The protein belongs to the ketol-acid reductoisomerase family. The cofactor is Mg(2+).

The enzyme catalyses (2R)-2,3-dihydroxy-3-methylbutanoate + NADP(+) = (2S)-2-acetolactate + NADPH + H(+). It catalyses the reaction (2R,3R)-2,3-dihydroxy-3-methylpentanoate + NADP(+) = (S)-2-ethyl-2-hydroxy-3-oxobutanoate + NADPH + H(+). It functions in the pathway amino-acid biosynthesis; L-isoleucine biosynthesis; L-isoleucine from 2-oxobutanoate: step 2/4. Its pathway is amino-acid biosynthesis; L-valine biosynthesis; L-valine from pyruvate: step 2/4. In terms of biological role, involved in the biosynthesis of branched-chain amino acids (BCAA). Catalyzes an alkyl-migration followed by a ketol-acid reduction of (S)-2-acetolactate (S2AL) to yield (R)-2,3-dihydroxy-isovalerate. In the isomerase reaction, S2AL is rearranged via a Mg-dependent methyl migration to produce 3-hydroxy-3-methyl-2-ketobutyrate (HMKB). In the reductase reaction, this 2-ketoacid undergoes a metal-dependent reduction by NADPH to yield (R)-2,3-dihydroxy-isovalerate. The sequence is that of Ketol-acid reductoisomerase (NADP(+)) from Campylobacter lari (strain RM2100 / D67 / ATCC BAA-1060).